Here is an 835-residue protein sequence, read N- to C-terminus: Microcephalin (835 aa).

The BRCT 1 domain occupies 1 to 93 (MAAPILKDVV…AHIDESLFPA (93 aa)). Ser279, Ser287, Ser296, and Ser333 each carry phosphoserine. Disordered regions lie at residues 313-381 (PDQK…RRSI) and 419-443 (DNLK…AQLS). A Phosphothreonine modification is found at Thr335. Residues 343-361 (LLIHSRPRSSSVKRKRVSH) are compositionally biased toward basic residues. Residues 434–443 (QLPSSPAQLS) show a composition bias toward polar residues. Residue Ser548 is modified to Phosphoserine. Residues 555 to 584 (AVGLKSTQNKGTTSKISNSSEGEAQSEHEP) form a disordered region. Positions 559-577 (KSTQNKGTTSKISNSSEGE) are enriched in polar residues. BRCT domains are found at residues 640–730 (SGRG…PFEL) and 751–833 (YRGT…NYLL).

As to quaternary structure, interacts with CDC27 and maybe other components of the APC/C complex. Interacts with histone variant H2AX under DNA damage conditions. Expressed in fetal brain, liver and kidney.

The protein localises to the cytoplasm. It localises to the cytoskeleton. The protein resides in the microtubule organizing center. It is found in the centrosome. In terms of biological role, implicated in chromosome condensation and DNA damage induced cellular responses. May play a role in neurogenesis and regulation of the size of the cerebral cortex. This chain is Microcephalin, found in Homo sapiens (Human).